Here is an 81-residue protein sequence, read N- to C-terminus: Putative membrane protein insertion efficiency factor (81 aa).

A disordered region spans residues 60–81 (WNPGGYDPVPTHNTSNSSPMAE). The segment covering 70 to 81 (THNTSNSSPMAE) has biased composition (polar residues).

Belongs to the UPF0161 family.

The protein resides in the cell inner membrane. Functionally, could be involved in insertion of integral membrane proteins into the membrane. The chain is Putative membrane protein insertion efficiency factor from Stutzerimonas stutzeri (strain A1501) (Pseudomonas stutzeri).